The sequence spans 183 residues: Capsid protein (183 aa).

The interval 136–183 (NAPILSTLPETTVVRRRGRSPRRRTPSPRRRRSQSPRRRRSQSRESQC) is disordered. A compositionally biased stretch (basic residues) spans 149-176 (VRRRGRSPRRRTPSPRRRRSQSPRRRRS). Residues S155, S162, and S170 each carry the phosphoserine; by host modification. A 1; half-length repeat occupies 155–161 (SPRRRTP). The interval 155–177 (SPRRRTPSPRRRRSQSPRRRRSQ) is 3 X 8 AA repeats of S-P-R-R-R-[PR]-S-Q. Residues 158–175 (RRTPSPRRRRSQSPRRRR) carry the Bipartite nuclear localization signal motif. 2 tandem repeats follow at residues 162–169 (SPRRRRSQ) and 170–177 (SPRRRRSQ). An RNA binding region spans residues 177–183 (QSRESQC).

Belongs to the orthohepadnavirus core antigen family. As to quaternary structure, homodimerizes, then multimerizes. Interacts with cytosol exposed regions of viral L glycoprotein present in the reticulum-to-Golgi compartment. Interacts with human FLNB. Phosphorylated form interacts with host importin alpha; this interaction depends on the exposure of the NLS, which itself depends upon genome maturation and/or phosphorylation of the capsid protein. Interacts with host NUP153. Post-translationally, phosphorylated by host SRPK1, SRPK2, and maybe protein kinase C or GAPDH. Phosphorylation is critical for pregenomic RNA packaging. Protein kinase C phosphorylation is stimulated by HBx protein and may play a role in transport of the viral genome to the nucleus at the late step during the viral replication cycle.

The protein localises to the virion. It is found in the host cytoplasm. In terms of biological role, self assembles to form an icosahedral capsid. Most capsids appear to be large particles with an icosahedral symmetry of T=4 and consist of 240 copies of capsid protein, though a fraction forms smaller T=3 particles consisting of 180 capsid proteins. Entering capsids are transported along microtubules to the nucleus. Phosphorylation of the capsid is thought to induce exposure of nuclear localization signal in the C-terminal portion of the capsid protein that allows binding to the nuclear pore complex via the importin (karyopherin-) alpha and beta. Capsids are imported in intact form through the nuclear pore into the nuclear basket, where it probably binds NUP153. Only capsids that contain the mature viral genome can release the viral DNA and capsid protein into the nucleoplasm. Immature capsids get stuck in the basket. Capsids encapsulate the pre-genomic RNA and the P protein. Pre-genomic RNA is reverse-transcribed into DNA while the capsid is still in the cytoplasm. The capsid can then either be directed to the nucleus, providing more genomes for transcription, or bud through the endoplasmic reticulum to provide new virions. The polypeptide is Capsid protein (Hepatitis B virus genotype B/C subtype adw (isolate Okinawa/pODW282/1998) (HBV-B)).